The primary structure comprises 98 residues: NADH-ubiquinone oxidoreductase chain 4L (98 aa).

The next 3 membrane-spanning stretches (helical) occupy residues 2–22 (SPAVLNITMAFTFSLLGTLMF), 26–46 (LMSTLLCLEGMMLSLFMLATI), and 59–79 (IPIAILVFAACEAAVGLALLA).

Belongs to the complex I subunit 4L family. As to quaternary structure, core subunit of respiratory chain NADH dehydrogenase (Complex I) which is composed of 45 different subunits.

It localises to the mitochondrion inner membrane. It catalyses the reaction a ubiquinone + NADH + 5 H(+)(in) = a ubiquinol + NAD(+) + 4 H(+)(out). In terms of biological role, core subunit of the mitochondrial membrane respiratory chain NADH dehydrogenase (Complex I) which catalyzes electron transfer from NADH through the respiratory chain, using ubiquinone as an electron acceptor. Part of the enzyme membrane arm which is embedded in the lipid bilayer and involved in proton translocation. The chain is NADH-ubiquinone oxidoreductase chain 4L (MT-ND4L) from Alexandromys kikuchii (Taiwan vole).